The chain runs to 232 residues: Phosphatidylserine decarboxylase proenzyme (232 aa).

S190 (schiff-base intermediate with substrate; via pyruvic acid) is an active-site residue. Pyruvic acid (Ser); by autocatalysis is present on S190.

This sequence belongs to the phosphatidylserine decarboxylase family. PSD-A subfamily. Heterodimer of a large membrane-associated beta subunit and a small pyruvoyl-containing alpha subunit. Requires pyruvate as cofactor. Post-translationally, is synthesized initially as an inactive proenzyme. Formation of the active enzyme involves a self-maturation process in which the active site pyruvoyl group is generated from an internal serine residue via an autocatalytic post-translational modification. Two non-identical subunits are generated from the proenzyme in this reaction, and the pyruvate is formed at the N-terminus of the alpha chain, which is derived from the carboxyl end of the proenzyme. The post-translation cleavage follows an unusual pathway, termed non-hydrolytic serinolysis, in which the side chain hydroxyl group of the serine supplies its oxygen atom to form the C-terminus of the beta chain, while the remainder of the serine residue undergoes an oxidative deamination to produce ammonia and the pyruvoyl prosthetic group on the alpha chain.

The protein resides in the cell membrane. It catalyses the reaction a 1,2-diacyl-sn-glycero-3-phospho-L-serine + H(+) = a 1,2-diacyl-sn-glycero-3-phosphoethanolamine + CO2. Its pathway is phospholipid metabolism; phosphatidylethanolamine biosynthesis; phosphatidylethanolamine from CDP-diacylglycerol: step 2/2. Its function is as follows. Catalyzes the formation of phosphatidylethanolamine (PtdEtn) from phosphatidylserine (PtdSer). This Rhizobium etli (strain ATCC 51251 / DSM 11541 / JCM 21823 / NBRC 15573 / CFN 42) protein is Phosphatidylserine decarboxylase proenzyme.